The chain runs to 355 residues: MSIQTDDFASSSPAARRVVSTAPASPNEEAIERALRPKGLADYVGQAKAREQLEIFIGAARKRSEALDHVLLFGPPGLGKTTLSHIIAAELGVNLRQTSGPVLEKPKDLAAILTNLERNDVLFIDEIHRLSPVVEEILYPALEDYQIDIMIGEGPAARSIKLELQPFTLIGATTRAGMLTNPLRDRFGIVARLEFYSVEELARIVTRSAGLLQVPTDTAGGLEIAKRSRGTPRIANRLLRRVRDYAQVKGDGRIDAAIADKALAMLDVDPQGFDVMDRKLLEAVIHRFDGGPVGLDNVAAAIGEESGTIEDVIEPYLIQQGYLQRTPRGRIATAAAYRHLGVLPPTTSGSELFDA.

The interval 1 to 26 is disordered; it reads MSIQTDDFASSSPAARRVVSTAPASP. Residues 5 to 196 form a large ATPase domain (RuvB-L) region; that stretch reads TDDFASSSPA…FGIVARLEFY (192 aa). The span at 9–22 shows a compositional bias: low complexity; it reads ASSSPAARRVVSTA. Residues L35, R36, G77, K80, T81, T82, 143 to 145, R186, Y196, and R233 contribute to the ATP site; that span reads EDY. T81 lines the Mg(2+) pocket. The interval 197 to 267 is small ATPAse domain (RuvB-S); it reads SVEELARIVT…IADKALAMLD (71 aa). The segment at 270–355 is head domain (RuvB-H); that stretch reads PQGFDVMDRK…TTSGSELFDA (86 aa). The DNA site is built by R325 and R330.

It belongs to the RuvB family. As to quaternary structure, homohexamer. Forms an RuvA(8)-RuvB(12)-Holliday junction (HJ) complex. HJ DNA is sandwiched between 2 RuvA tetramers; dsDNA enters through RuvA and exits via RuvB. An RuvB hexamer assembles on each DNA strand where it exits the tetramer. Each RuvB hexamer is contacted by two RuvA subunits (via domain III) on 2 adjacent RuvB subunits; this complex drives branch migration. In the full resolvosome a probable DNA-RuvA(4)-RuvB(12)-RuvC(2) complex forms which resolves the HJ.

The protein localises to the cytoplasm. The catalysed reaction is ATP + H2O = ADP + phosphate + H(+). In terms of biological role, the RuvA-RuvB-RuvC complex processes Holliday junction (HJ) DNA during genetic recombination and DNA repair, while the RuvA-RuvB complex plays an important role in the rescue of blocked DNA replication forks via replication fork reversal (RFR). RuvA specifically binds to HJ cruciform DNA, conferring on it an open structure. The RuvB hexamer acts as an ATP-dependent pump, pulling dsDNA into and through the RuvAB complex. RuvB forms 2 homohexamers on either side of HJ DNA bound by 1 or 2 RuvA tetramers; 4 subunits per hexamer contact DNA at a time. Coordinated motions by a converter formed by DNA-disengaged RuvB subunits stimulates ATP hydrolysis and nucleotide exchange. Immobilization of the converter enables RuvB to convert the ATP-contained energy into a lever motion, pulling 2 nucleotides of DNA out of the RuvA tetramer per ATP hydrolyzed, thus driving DNA branch migration. The RuvB motors rotate together with the DNA substrate, which together with the progressing nucleotide cycle form the mechanistic basis for DNA recombination by continuous HJ branch migration. Branch migration allows RuvC to scan DNA until it finds its consensus sequence, where it cleaves and resolves cruciform DNA. This chain is Holliday junction branch migration complex subunit RuvB, found in Methylibium petroleiphilum (strain ATCC BAA-1232 / LMG 22953 / PM1).